Reading from the N-terminus, the 164-residue chain is Nitric oxide synthase, inducible (164 aa).

A (6R)-L-erythro-5,6,7,8-tetrahydrobiopterin-binding site is contributed by phenylalanine 3. Tyrosine 18 serves as a coordination point for heme b. Positions 42–62 (FKGLIRAVLFSQTLIKSALAK) are calmodulin-binding. The region spanning 66 to 164 (CTVLYATETG…SRMYPHFCAF (99 aa)) is the Flavodoxin-like domain. Residues threonine 72, glutamate 73, threonine 74, lysine 76, serine 77, serine 118, threonine 119, serine 155, and cysteine 162 each coordinate FMN.

Belongs to the NOS family. In terms of assembly, homodimer. Heme b serves as cofactor. Requires FAD as cofactor. It depends on FMN as a cofactor. The cofactor is (6R)-L-erythro-5,6,7,8-tetrahydrobiopterin.

It is found in the cytoplasm. The protein resides in the cytosol. It carries out the reaction 2 L-arginine + 3 NADPH + 4 O2 + H(+) = 2 L-citrulline + 2 nitric oxide + 3 NADP(+) + 4 H2O. With respect to regulation, not stimulated by calcium/calmodulin. Produces nitric oxide (NO) which is a messenger molecule with diverse functions throughout the body. In macrophages, NO mediates tumoricidal and bactericidal actions. Also has nitrosylase activity and mediates cysteine S-nitrosylation of cytoplasmic target proteins such COX2. This is Nitric oxide synthase, inducible (nos2) from Carassius auratus (Goldfish).